A 616-amino-acid polypeptide reads, in one-letter code: Alpha terpineol synthase, chloroplastic (616 aa).

A chloroplast-targeting transit peptide spans 1–41 (MALLSVAPLQKPLTSCSPFSTTMPTLGVCTPRKVVTPSIIM). Mg(2+) is bound by residues Asp-367, Asp-371, and Asp-519. The DDXXD motif signature appears at 367-371 (DDIYD).

The protein belongs to the terpene synthase family. Tpsd subfamily. The cofactor is Mg(2+). Mn(2+) is required as a cofactor.

The protein resides in the plastid. The protein localises to the chloroplast. It catalyses the reaction (2E)-geranyl diphosphate + H2O = (S)-alpha-terpineol + diphosphate. The enzyme catalyses (2E)-geranyl diphosphate + H2O = 1,8-cineole + diphosphate. It carries out the reaction (2E)-geranyl diphosphate = beta-myrcene + diphosphate. The catalysed reaction is (2E)-geranyl diphosphate = (1S,5S)-sabinene + diphosphate. The protein operates within terpene metabolism; oleoresin biosynthesis. It participates in secondary metabolite biosynthesis; terpenoid biosynthesis. Monoterpene synthase (TPS) involved in the biosynthesis of monoterpene natural products included in conifer oleoresin secretions and volatile emissions; these compounds contribute to biotic and abiotic stress defense against herbivores and pathogens. Catalyzes the conversion of (2E)-geranyl diphosphate (GPP) to alpha-terpineol and, to a lower extent, to 1,8-cineole, myrcene and (-)-sabinene. This chain is Alpha terpineol synthase, chloroplastic, found in Pinus contorta (Shore pine).